The sequence spans 171 residues: Plastocyanin minor isoform, chloroplastic (171 aa).

The Plastocyanin-like domain occupies 73-171 (MEVLLGSDDG…AGMVGKLTVK (99 aa)). Residues histidine 109, cysteine 156, histidine 159, and methionine 164 each contribute to the Cu cation site.

It belongs to the plastocyanin family. It depends on Cu(2+) as a cofactor.

The protein localises to the plastid. It localises to the chloroplast thylakoid membrane. Functionally, participates in electron transfer between P700 and the cytochrome b6-f complex in photosystem I. Seems to be a minor plastocyanin in Arabidopsis. This is Plastocyanin minor isoform, chloroplastic (PETE) from Arabidopsis thaliana (Mouse-ear cress).